We begin with the raw amino-acid sequence, 151 residues long: Austinoid biosynthesis clusters protein F (151 aa).

The protein belongs to the trt14 isomerase family. As to quaternary structure, homodimer.

It participates in secondary metabolite biosynthesis; terpenoid biosynthesis. Part of the gene cluster B that mediates the biosynthesis of the fungal meroterpenoid acetoxydehydroaustin. The first step of the pathway is the synthesis of 3,5-dimethylorsellinic acid by the polyketide synthase ausA. 3,5-dimethylorsellinic acid is then prenylated by the polyprenyl transferase ausN. Further epoxidation by the FAD-dependent monooxygenase ausM and cyclization by the probable terpene cyclase ausL lead to the formation of protoaustinoid A. Protoaustinoid A is then oxidized to spiro-lactone preaustinoid A3 by the combined action of the FAD-binding monooxygenases ausB and ausC, and the dioxygenase ausE. Acid-catalyzed keto-rearrangement and ring contraction of the tetraketide portion of preaustinoid A3 by ausJ lead to the formation of preaustinoid A4. The aldo-keto reductase ausK, with the help of ausH, is involved in the next step by transforming preaustinoid A4 into isoaustinone which is in turn hydroxylated by the P450 monooxygenase ausI to form austinolide. The cytochrome P450 monooxygenase ausG then modifies austinolide to austinol. Austinol is further acetylated to austin by the O-acetyltransferase ausP, which spontaneously changes to dehydroaustin. The cytochrome P450 monooxygenase then converts dehydroaustin is into 7-dehydrodehydroaustin. The hydroxylation catalyzed by ausR permits the second O-acetyltransferase ausQ to add an additional acetyl group to the molecule, leading to the formation of acetoxydehydroaustin. Due to genetic rearrangements of the clusters and the subsequent loss of some enzymes, the end product of the Penicillium brasilianum austinoid biosynthesis clusters is acetoxydehydroaustin. This Penicillium brasilianum protein is Austinoid biosynthesis clusters protein F.